A 242-amino-acid chain; its full sequence is Uridylate kinase (242 aa).

15-18 (KLSG) lines the ATP pocket. UMP is bound at residue Gly-57. ATP is bound by residues Gly-58 and Arg-62. UMP-binding positions include Asp-78 and 139-146 (TGNPFFTT). Residues Thr-166, Tyr-172, and Asp-175 each coordinate ATP.

The protein belongs to the UMP kinase family. Homohexamer.

Its subcellular location is the cytoplasm. It catalyses the reaction UMP + ATP = UDP + ADP. Its pathway is pyrimidine metabolism; CTP biosynthesis via de novo pathway; UDP from UMP (UMPK route): step 1/1. Its activity is regulated as follows. Inhibited by UTP. Catalyzes the reversible phosphorylation of UMP to UDP. The chain is Uridylate kinase from Acinetobacter baylyi (strain ATCC 33305 / BD413 / ADP1).